Reading from the N-terminus, the 199-residue chain is NAD(P)H dehydrogenase (quinone) (199 aa).

Residues 4–190 form the Flavodoxin-like domain; it reads ILVLYYSSWG…EGARFQGKRL (187 aa). FMN is bound by residues 10–15 and 78–80; these read SSWGHM and TRY. An NAD(+)-binding site is contributed by Trp12. Trp98 contacts substrate. FMN-binding positions include 113–119 and His134; that span reads STATQHG. The segment at 155–175 is disordered; that stretch reads VRGGAPYGMTTTSDTDGSRMP.

This sequence belongs to the WrbA family. It depends on FMN as a cofactor.

The catalysed reaction is a quinone + NADH + H(+) = a quinol + NAD(+). The enzyme catalyses a quinone + NADPH + H(+) = a quinol + NADP(+). The sequence is that of NAD(P)H dehydrogenase (quinone) from Chelativorans sp. (strain BNC1).